The chain runs to 372 residues: 3-dehydroquinate synthase (372 aa).

NAD(+)-binding positions include 116–120 (GVVGD), 140–141 (TT), lysine 153, lysine 162, and 180–183 (TLKT). Zn(2+) contacts are provided by glutamate 195, histidine 260, and histidine 277.

The protein belongs to the sugar phosphate cyclases superfamily. Dehydroquinate synthase family. NAD(+) is required as a cofactor. The cofactor is Co(2+). Zn(2+) serves as cofactor.

Its subcellular location is the cytoplasm. It catalyses the reaction 7-phospho-2-dehydro-3-deoxy-D-arabino-heptonate = 3-dehydroquinate + phosphate. It participates in metabolic intermediate biosynthesis; chorismate biosynthesis; chorismate from D-erythrose 4-phosphate and phosphoenolpyruvate: step 2/7. Its function is as follows. Catalyzes the conversion of 3-deoxy-D-arabino-heptulosonate 7-phosphate (DAHP) to dehydroquinate (DHQ). This chain is 3-dehydroquinate synthase, found in Prochlorococcus marinus (strain MIT 9313).